Reading from the N-terminus, the 163-residue chain is Neurotrophin-3 (163 aa).

The signal sequence occupies residues 1–3 (IQS). A propeptide spanning residues 4–119 (SSMDQGILTE…VLNRTSRRKR (116 aa)) is cleaved from the precursor. The interval 36–61 (QTARTKDGMQTTVKKTEAEADARASQ) is disordered. Basic and acidic residues predominate over residues 49–61 (KKTEAEADARASQ). A glycan (N-linked (GlcNAc...) asparagine) is linked at asparagine 112.

It belongs to the NGF-beta family.

It is found in the secreted. Seems to promote the survival of visceral and proprioceptive sensory neurons. The protein is Neurotrophin-3 (NTF3) of Boa constrictor (Boa).